Reading from the N-terminus, the 37-residue chain is Non-specific lipid-transfer protein (37 aa).

Belongs to the plant LTP family.

Its function is as follows. Plant non-specific lipid-transfer proteins transfer phospholipids as well as galactolipids across membranes. May play a role in wax or cutin deposition in the cell walls of expanding epidermal cells and certain secretory tissues. The chain is Non-specific lipid-transfer protein from Artemisia vulgaris (Mugwort).